A 119-amino-acid chain; its full sequence is Circadian clock oscillator protein KaiB (119 aa).

The protein belongs to the KaiB family. In terms of assembly, may undergo a major conformational rearrangment; in the free state forms homooligomers. When bound to KaiC switches to a monomeric thioredoxin-fold (KaiB(fs)). The active oscillator complex is probably KaiC(6):KaiB(6).

In terms of biological role, component of the KaiBC clock protein complex, which constitutes the main circadian regulator in cyanobacteria; it may modify the ATPase activity of KaiC. Its function is as follows. May be a metamorphic protein which reversibly switches between an inactive tetrameric fold and a rare, thioredoxin-like monomeric fold (KaiB(fs)). KaiB(fs) binds phospho-KaiC, and perhaps clock output effectors. The protein is Circadian clock oscillator protein KaiB of Prochlorococcus marinus (strain MIT 9313).